Consider the following 687-residue polypeptide: UvrABC system protein C (687 aa).

The GIY-YIG domain occupies 16 to 95; sequence TEPGVYKFRD…IKKFDPHFNV (80 aa). The UVR domain maps to 208-243; sequence DSVVRRLTNEMISASEALDFEKAARKRDDLNAVRKI.

This sequence belongs to the UvrC family. Interacts with UvrB in an incision complex.

Its subcellular location is the cytoplasm. Functionally, the UvrABC repair system catalyzes the recognition and processing of DNA lesions. UvrC both incises the 5' and 3' sides of the lesion. The N-terminal half is responsible for the 3' incision and the C-terminal half is responsible for the 5' incision. The polypeptide is UvrABC system protein C (Corynebacterium diphtheriae (strain ATCC 700971 / NCTC 13129 / Biotype gravis)).